Here is a 426-residue protein sequence, read N- to C-terminus: MSKQINAIRGMNDLYGDQSHAFDYLVQTAESVLKQYGFQSIRLPIVEKTELFARSIGEVTDIVEKEMYTFEDRNGDSLTLRPEGTAGCVRAVIQNGLAHNQIQKLYYTGPMFRHERPQKGRYRQFNQFGVEVFGIESVDIDAELIALSARLWERLGLQNLELQINSLGSQAARQAYRDILVAYFEEHKSQLDEDSLRRLSTNPLRILDTKNPDMKALVEAAPKLMDHLDEASKQHYEELKAHLDDLGVAYVENPNLVRGLDYYNRTVFEWVTTELGAQGTVCAGGRYDGLVEQIGGKPTPAVGFAMGIERLMALLMDNELVHEENGPDVYMVLAGDSTKRPGLVISEQIRENLPDIKVQMNCGGGSFKSQFKKADKSGARIALVLGEDEVNQKQIAVKYLREEREQEMVPWDQMVTLLKTALTESK.

This sequence belongs to the class-II aminoacyl-tRNA synthetase family. Homodimer.

Its subcellular location is the cytoplasm. The enzyme catalyses tRNA(His) + L-histidine + ATP = L-histidyl-tRNA(His) + AMP + diphosphate + H(+). The chain is Histidine--tRNA ligase from Hydrogenovibrio crunogenus (strain DSM 25203 / XCL-2) (Thiomicrospira crunogena).